We begin with the raw amino-acid sequence, 148 residues long: Large ribosomal subunit protein uL15 (148 aa).

The segment covering 1–30 (MPSRLRKTRKLRGHVSHGHGRIGKHRKHPG) has biased composition (basic residues). A disordered region spans residues 1-37 (MPSRLRKTRKLRGHVSHGHGRIGKHRKHPGGRGNAGG). Histidine 39 bears the (3S)-3-hydroxyhistidine mark. N6-acetyllysine is present on residues lysine 47 and lysine 55. At serine 68 the chain carries Phosphoserine. An N6-acetyllysine modification is found at lysine 110.

It belongs to the universal ribosomal protein uL15 family. In terms of assembly, component of the large ribosomal subunit. Post-translationally, hydroxylated on His-39 by MINA.

Its subcellular location is the cytoplasm. Functionally, component of the large ribosomal subunit. The ribosome is a large ribonucleoprotein complex responsible for the synthesis of proteins in the cell. The chain is Large ribosomal subunit protein uL15 (Rpl27a) from Mus musculus (Mouse).